A 323-amino-acid polypeptide reads, in one-letter code: Secreted frizzled-related protein 3 (323 aa).

An N-terminal signal peptide occupies residues 1-32 (MVCCGPGRMLLGWAGLLVLAALCLLQVPGAQA). Residues 33–150 (AACEPVRIPL…VYDRGVCISP (118 aa)) form the FZ domain. 5 disulfides stabilise this stretch: Cys-35–Cys-96, Cys-43–Cys-89, Cys-80–Cys-119, Cys-108–Cys-147, and Cys-112–Cys-136. Residue Asn-49 is glycosylated (N-linked (GlcNAc...) asparagine). The NTR domain occupies 178 to 298 (CKCKPVRATQ…WDMKLRHLGL (121 aa)). A disordered region spans residues 299-323 (GKTDASDSTQNQKSGRNSNPRPARS). Positions 304–323 (SDSTQNQKSGRNSNPRPARS) are enriched in polar residues.

This sequence belongs to the secreted frizzled-related protein (sFRP) family. In terms of assembly, interacts with MYOC. As to expression, expressed in kidney, brain, testis. Weak expression in spleen and heart.

The protein localises to the secreted. Its function is as follows. Soluble frizzled-related proteins (sFRPS) function as modulators of Wnt signaling through direct interaction with Wnts. They have a role in regulating cell growth and differentiation in specific cell types. SFRP3/FRZB appears to be involved in limb skeletogenesis. Antagonist of Wnt8 signaling. Regulates chondrocyte maturation and long bone development. The chain is Secreted frizzled-related protein 3 (Frzb) from Mus musculus (Mouse).